A 621-amino-acid polypeptide reads, in one-letter code: uncharacterized protein (621 aa).

3 helical membrane passes run 240–260 (FFDA…NLLW), 548–568 (LGIV…VWTV), and 587–607 (VIIG…LTFM).

Its subcellular location is the cell membrane. This is an uncharacterized protein from Mycoplasma pneumoniae (strain ATCC 29342 / M129 / Subtype 1) (Mycoplasmoides pneumoniae).